The sequence spans 172 residues: Allergen Bos d 2 (172 aa).

The signal sequence occupies residues 1–16 (MKAVFLTLLFGLVCTA). At Q17 the chain carries Pyrrolidone carboxylic acid. 2 cysteine pairs are disulfide-bonded: C60/C64 and C79/C170.

This sequence belongs to the calycin superfamily. Lipocalin family. As to expression, found exclusively in skin. Produced in sweat glands and transported to the skin surface.

It localises to the secreted. Probable pheromone carrier. The sequence is that of Allergen Bos d 2 from Bos taurus (Bovine).